The following is a 352-amino-acid chain: Endophilin-A1 (352 aa).

A membrane-binding amphipathic helix region spans residues 1–21 (MSVAGLKKQFHKATQKVSEKV). The segment at 1 to 27 (MSVAGLKKQFHKATQKVSEKVGGAEGT) is disordered. A binds and tubulates liposomes region spans residues 1 to 125 (MSVAGLKKQF…EVGEAMRELS (125 aa)). The region spanning 18-249 (SEKVGGAEGT…LEERIRQASS (232 aa)) is the BAR domain. The required for dimerization upon membrane association stretch occupies residues 60 to 87 (PNPASRAKLSMINTMSKIRGQEKGPGYP). Positions 181-248 (EELRQALEKF…RLEERIRQAS (68 aa)) form a coiled coil. Residues 245 to 257 (RQASSQPRREYQP) are compositionally biased toward basic and acidic residues. A disordered region spans residues 245-289 (RQASSQPRREYQPKPRMSLEFPTGDSTQPNGGLSHTGTPKPSGVQ). Ser-262 is modified (phosphoserine). A compositionally biased stretch (polar residues) spans 268 to 283 (GDSTQPNGGLSHTGTP). The SH3 domain maps to 290 to 349 (MDQPCCRALYDFEPENEGELGFKEGDIITLTNQIDENWYEGMLHGHSGFFPINYVEILVA). At Tyr-299 the chain carries Phosphotyrosine.

It belongs to the endophilin family. Monomer; in cytoplasm. Homodimer; when associated with membranes. Interacts with OPHN1. Interacts with SYNJ1. Interacts with DNM1. Interacts with MAP4K3; the interaction appears to regulate MAP4K3-mediated JNK activation. Interacts with PDCD6IP. Interacts with ATXN2. Interacts with ADAM9 and ADAM15 cytoplasmic tails. Interacts with BIN2. Interacts with TMEM108. Interacts with ADGRB2. Brain, mostly in frontal cortex. Expressed at high level in fetal cerebellum.

The protein resides in the cytoplasm. Its subcellular location is the membrane. The protein localises to the early endosome. It is found in the presynapse. Implicated in synaptic vesicle endocytosis. May recruit other proteins to membranes with high curvature. Required for BDNF-dependent dendrite outgrowth. Cooperates with SH3GL2 to mediate BDNF-NTRK2 early endocytic trafficking and signaling from early endosomes. The sequence is that of Endophilin-A1 (SH3GL2) from Homo sapiens (Human).